The following is a 575-amino-acid chain: Acetylcholine receptor subunit beta-type acr-2 (575 aa).

A signal peptide spans 1-20 (MKKTVKILLILITVFLKVHC). Residues 21–270 (NGGHDDEAAD…IRRKTLFYTV (250 aa)) lie on the Extracellular side of the membrane. A disordered region spans residues 31 to 57 (FLSHTNIDDPNNSSDPNKNSDQGDTMG). A compositionally biased stretch (low complexity) spans 38–50 (DDPNNSSDPNKNS). Residues asparagine 41, asparagine 42, asparagine 80, and asparagine 131 are each glycosylated (N-linked (GlcNAc...) asparagine). Cysteine 185 and cysteine 199 are disulfide-bonded. 3 consecutive transmembrane segments (helical) span residues 271 to 291 (ILII…YLPV), 299 to 319 (LTIS…KILP), and 331 to 351 (LLLA…IVNI). Residues 352-527 (YFRSALSHKM…WKYVAMVLDR (176 aa)) lie on the Cytoplasmic side of the membrane. The chain crosses the membrane as a helical span at residues 528-548 (LILLIFFGVTLGGTLGIICSA).

It belongs to the ligand-gated ion channel (TC 1.A.9) family. Acetylcholine receptor (TC 1.A.9.1) subfamily. Component of nicotinic acetylcholine receptor. In cholinergic motoneurons, composed of 2 non-alpha subunits acr-2 and acr-3, and 3 alpha subunits unc-38, unc-63 and acr-12. Specifically expressed in cholinergic ventral cord motoneurons of the VA, VB, DA and DB classes but not AS and VC classes. Expressed in PVQ and DVC neurons in the tail.

The protein localises to the postsynaptic cell membrane. Its subcellular location is the cell membrane. Non-alpha subunit of nicotinic acetylcholine receptor (nAChR). Acts in cholinergic motoneurons to regulate presynaptic neurotransmitter release, thereby ensuring normal level of excitation of cholinergic motoneurons during locomotion. The sequence is that of Acetylcholine receptor subunit beta-type acr-2 (acr-2) from Caenorhabditis elegans.